A 553-amino-acid chain; its full sequence is Glucose-6-phosphate isomerase (553 aa).

The active-site Proton donor is glutamate 357. Residues histidine 388 and lysine 514 contribute to the active site. The segment at 527–553 (ADSPAAQSDSSTDALVRRYRTERGRTA) is disordered. A compositionally biased stretch (basic and acidic residues) spans 541-553 (LVRRYRTERGRTA).

This sequence belongs to the GPI family.

Its subcellular location is the cytoplasm. The enzyme catalyses alpha-D-glucose 6-phosphate = beta-D-fructose 6-phosphate. It functions in the pathway carbohydrate biosynthesis; gluconeogenesis. The protein operates within carbohydrate degradation; glycolysis; D-glyceraldehyde 3-phosphate and glycerone phosphate from D-glucose: step 2/4. Catalyzes the reversible isomerization of glucose-6-phosphate to fructose-6-phosphate. This is Glucose-6-phosphate isomerase from Mycolicibacterium vanbaalenii (strain DSM 7251 / JCM 13017 / BCRC 16820 / KCTC 9966 / NRRL B-24157 / PYR-1) (Mycobacterium vanbaalenii).